A 157-amino-acid chain; its full sequence is Methylamine utilization protein MauL (157 aa).

The protein operates within one-carbon metabolism; methylamine degradation. Functionally, probably involved in TTQ prosthetic group biosynthesis. The sequence is that of Methylamine utilization protein MauL (mauL) from Methylobacillus flagellatus (strain ATCC 51484 / DSM 6875 / VKM B-1610 / KT).